Consider the following 463-residue polypeptide: Ataxin-10 homolog (463 aa).

The protein belongs to the ataxin-10 family.

Its subcellular location is the cytoplasm. In terms of biological role, may play a role in the regulation of cytokinesis. This is Ataxin-10 homolog (CTR86) from Candida albicans (strain SC5314 / ATCC MYA-2876) (Yeast).